We begin with the raw amino-acid sequence, 259 residues long: MKDVQSEKDTREIPLKHVGIKKLKYPVQVLDRENKVQNTVADINMYVDLPKDFRGTHMSRFLEVFNKFHLKIDPKTIKKILDDLKQTLKAQSAKIEIMFPYFLKKKAPVTKIESYMEYLCGFSAYDGPQKCEFYTIVEVSVQTLCPCSKEISKYNAHNQRANVRIEVETSELVWFEELIEIAEDSASVPLFSLLKRPDEKFVTEKAYENPKFVEDVARDIAIRLKDNPKINWFKVEVESYESIHNHNAFACVDSTIMEV.

This sequence belongs to the GTP cyclohydrolase IV family.

It catalyses the reaction GTP + H2O = 7,8-dihydroneopterin 3'-triphosphate + formate + H(+). It participates in cofactor biosynthesis; 7,8-dihydroneopterin triphosphate biosynthesis; 7,8-dihydroneopterin triphosphate from GTP: step 1/1. In terms of biological role, converts GTP to 7,8-dihydroneopterin triphosphate. The protein is GTP cyclohydrolase FolE2 of Thermosipho melanesiensis (strain DSM 12029 / CIP 104789 / BI429).